The sequence spans 255 residues: tRNA (guanine-N(1)-)-methyltransferase (255 aa).

S-adenosyl-L-methionine-binding positions include Gly-113 and 133-138 (IGDYVL).

This sequence belongs to the RNA methyltransferase TrmD family. In terms of assembly, homodimer.

It localises to the cytoplasm. The enzyme catalyses guanosine(37) in tRNA + S-adenosyl-L-methionine = N(1)-methylguanosine(37) in tRNA + S-adenosyl-L-homocysteine + H(+). Specifically methylates guanosine-37 in various tRNAs. The polypeptide is tRNA (guanine-N(1)-)-methyltransferase (Klebsiella pneumoniae subsp. pneumoniae (strain ATCC 700721 / MGH 78578)).